Consider the following 225-residue polypeptide: GTP cyclohydrolase III (225 aa).

Belongs to the archaeal-type GTP cyclohydrolase family.

It catalyses the reaction GTP + 3 H2O = 2-amino-5-formylamino-6-(5-phospho-D-ribosylamino)pyrimidin-4(3H)-one + 2 phosphate + 2 H(+). Its function is as follows. Catalyzes the formation of 2-amino-5-formylamino-6-ribofuranosylamino-4(3H)-pyrimidinone ribonucleotide monophosphate and inorganic phosphate from GTP. Also has an independent pyrophosphate phosphohydrolase activity. This Sulfurisphaera tokodaii (strain DSM 16993 / JCM 10545 / NBRC 100140 / 7) (Sulfolobus tokodaii) protein is GTP cyclohydrolase III.